Reading from the N-terminus, the 569-residue chain is Acetate/butyrate--CoA ligase AAE7, peroxisomal (569 aa).

The Microbody targeting signal signature appears at 567 to 569 (SRL).

The protein belongs to the ATP-dependent AMP-binding enzyme family. As to expression, expressed in roots, leaves, stems, flowers and developing seeds.

The protein localises to the peroxisome. The enzyme catalyses acetate + ATP + CoA = acetyl-CoA + AMP + diphosphate. The catalysed reaction is a medium-chain fatty acid + ATP + CoA = a medium-chain fatty acyl-CoA + AMP + diphosphate. Functionally, peroxisomal acetate/butyrate--CoA ligase that is probably involved in the activation of exogenous acetate for entry into the glyoxylate cycle. May play a role to prevent carbon loss from peroxisomes during lipid mobilization. In vitro, is active with both acetate and butyrate. The polypeptide is Acetate/butyrate--CoA ligase AAE7, peroxisomal (AAE7) (Arabidopsis thaliana (Mouse-ear cress)).